A 178-amino-acid chain; its full sequence is Large ribosomal subunit protein uL5 (178 aa).

It belongs to the universal ribosomal protein uL5 family. In terms of assembly, part of the 50S ribosomal subunit; part of the 5S rRNA/L5/L18/L25 subcomplex. Contacts the 5S rRNA and the P site tRNA. Forms a bridge to the 30S subunit in the 70S ribosome.

This is one of the proteins that bind and probably mediate the attachment of the 5S RNA into the large ribosomal subunit, where it forms part of the central protuberance. In the 70S ribosome it contacts protein S13 of the 30S subunit (bridge B1b), connecting the 2 subunits; this bridge is implicated in subunit movement. Contacts the P site tRNA; the 5S rRNA and some of its associated proteins might help stabilize positioning of ribosome-bound tRNAs. The protein is Large ribosomal subunit protein uL5 of Syntrophomonas wolfei subsp. wolfei (strain DSM 2245B / Goettingen).